Here is a 584-residue protein sequence, read N- to C-terminus: A-type ATP synthase subunit A (584 aa).

Residue 233 to 240 (GPFGSGKT) coordinates ATP.

The protein belongs to the ATPase alpha/beta chains family. Has multiple subunits with at least A(3), B(3), C, D, E, F, H, I and proteolipid K(x).

It is found in the cell membrane. It carries out the reaction ATP + H2O + 4 H(+)(in) = ADP + phosphate + 5 H(+)(out). In terms of biological role, component of the A-type ATP synthase that produces ATP from ADP in the presence of a proton gradient across the membrane. The A chain is the catalytic subunit. This Methanobrevibacter smithii (strain ATCC 35061 / DSM 861 / OCM 144 / PS) protein is A-type ATP synthase subunit A.